The primary structure comprises 1072 residues: DNA-directed RNA polymerase subunit beta (1072 aa).

It belongs to the RNA polymerase beta chain family. In terms of assembly, in plastids the minimal PEP RNA polymerase catalytic core is composed of four subunits: alpha, beta, beta', and beta''. When a (nuclear-encoded) sigma factor is associated with the core the holoenzyme is formed, which can initiate transcription.

The protein resides in the plastid. Its subcellular location is the chloroplast. It carries out the reaction RNA(n) + a ribonucleoside 5'-triphosphate = RNA(n+1) + diphosphate. In terms of biological role, DNA-dependent RNA polymerase catalyzes the transcription of DNA into RNA using the four ribonucleoside triphosphates as substrates. This chain is DNA-directed RNA polymerase subunit beta, found in Amborella trichopoda.